The following is a 107-amino-acid chain: Phosphoribosyl-ATP pyrophosphatase (107 aa).

This sequence belongs to the PRA-PH family.

It is found in the cytoplasm. The catalysed reaction is 1-(5-phospho-beta-D-ribosyl)-ATP + H2O = 1-(5-phospho-beta-D-ribosyl)-5'-AMP + diphosphate + H(+). The protein operates within amino-acid biosynthesis; L-histidine biosynthesis; L-histidine from 5-phospho-alpha-D-ribose 1-diphosphate: step 2/9. This is Phosphoribosyl-ATP pyrophosphatase from Bacillus cereus (strain Q1).